A 424-amino-acid chain; its full sequence is MLDVKILRTQFEEVKEKLMQRGGDLTNIDRFEQLDKDRRRLIAEVEELKSKRNDVSQQIAVLKREKKDAEPLIAQMREVGDRIKRMDEQIRQLEAELDDLLLSIPNVPHESVPIGQSEEDNVEVRRWGEPRSFSFEPKPHWEIADRLGLLDFERAAKVAGSRFVFYKGLGARLERALINFMLDIHLDEFGYEEVLPPYLVNRASMIGTGQLPKFAEDAFHLDSEDYFLIPTAEVPVTNLHRDEILAADDLPIYYAAYSACFRAEAGSAGRDTRGLIRQHQFNKVELVKFVKPEDSYDELEKLTRQAETILQRLGLPYRVVALCTGDLGFSAAKTYDIEVWLPSYGTYREISSCSNFEAFQARRANIRFRRDPKAKPEYVHTLNGSGLAIGRTVAAILENYQQEDGSVIVPEALRPYMGNRDVIR.

An L-serine-binding site is contributed by 231 to 233; that stretch reads TAE. 262–264 is an ATP binding site; the sequence is RAE. Glu-285 lines the L-serine pocket. 349-352 provides a ligand contact to ATP; the sequence is EISS. Position 385 (Ser-385) interacts with L-serine.

It belongs to the class-II aminoacyl-tRNA synthetase family. Type-1 seryl-tRNA synthetase subfamily. Homodimer. The tRNA molecule binds across the dimer.

The protein resides in the cytoplasm. It catalyses the reaction tRNA(Ser) + L-serine + ATP = L-seryl-tRNA(Ser) + AMP + diphosphate + H(+). The catalysed reaction is tRNA(Sec) + L-serine + ATP = L-seryl-tRNA(Sec) + AMP + diphosphate + H(+). Its pathway is aminoacyl-tRNA biosynthesis; selenocysteinyl-tRNA(Sec) biosynthesis; L-seryl-tRNA(Sec) from L-serine and tRNA(Sec): step 1/1. Its function is as follows. Catalyzes the attachment of serine to tRNA(Ser). Is also able to aminoacylate tRNA(Sec) with serine, to form the misacylated tRNA L-seryl-tRNA(Sec), which will be further converted into selenocysteinyl-tRNA(Sec). This is Serine--tRNA ligase from Geobacillus kaustophilus (strain HTA426).